We begin with the raw amino-acid sequence, 210 residues long: Large ribosomal subunit protein uL3 (210 aa).

Belongs to the universal ribosomal protein uL3 family. In terms of assembly, part of the 50S ribosomal subunit. Forms a cluster with proteins L14 and L19.

One of the primary rRNA binding proteins, it binds directly near the 3'-end of the 23S rRNA, where it nucleates assembly of the 50S subunit. In Pediococcus pentosaceus (strain ATCC 25745 / CCUG 21536 / LMG 10740 / 183-1w), this protein is Large ribosomal subunit protein uL3.